We begin with the raw amino-acid sequence, 135 residues long: uncharacterized protein (135 aa).

The next 2 membrane-spanning stretches (helical) occupy residues isoleucine 20–leucine 40 and isoleucine 47–threonine 67.

Belongs to the plectrovirus ORF5 family.

It is found in the host membrane. This is an uncharacterized protein from Spiroplasma virus SpV1-C74 (SpV1).